Consider the following 204-residue polypeptide: Urease accessory protein UreG (204 aa).

Residue 12 to 19 (GPVGSGKT) coordinates GTP.

It belongs to the SIMIBI class G3E GTPase family. UreG subfamily. Homodimer. UreD, UreF and UreG form a complex that acts as a GTP-hydrolysis-dependent molecular chaperone, activating the urease apoprotein by helping to assemble the nickel containing metallocenter of UreC. The UreE protein probably delivers the nickel.

It localises to the cytoplasm. Facilitates the functional incorporation of the urease nickel metallocenter. This process requires GTP hydrolysis, probably effectuated by UreG. The chain is Urease accessory protein UreG from Azotobacter vinelandii (strain DJ / ATCC BAA-1303).